The sequence spans 221 residues: Cytidylate kinase (221 aa).

11–19 (GPSGVGKST) is an ATP binding site.

It belongs to the cytidylate kinase family. Type 1 subfamily.

Its subcellular location is the cytoplasm. It catalyses the reaction CMP + ATP = CDP + ADP. The catalysed reaction is dCMP + ATP = dCDP + ADP. This chain is Cytidylate kinase, found in Mycoplasmopsis pulmonis (strain UAB CTIP) (Mycoplasma pulmonis).